The following is a 271-amino-acid chain: 4-hydroxy-tetrahydrodipicolinate reductase (271 aa).

Residues 10–15 (GAGGRM), glutamate 36, 100–102 (GTT), and 124–127 (SGNM) contribute to the NAD(+) site. Catalysis depends on histidine 157, which acts as the Proton donor/acceptor. A (S)-2,3,4,5-tetrahydrodipicolinate-binding site is contributed by histidine 158. Lysine 161 (proton donor) is an active-site residue. 167-168 (GT) is a binding site for (S)-2,3,4,5-tetrahydrodipicolinate.

The protein belongs to the DapB family.

The protein resides in the cytoplasm. It carries out the reaction (S)-2,3,4,5-tetrahydrodipicolinate + NAD(+) + H2O = (2S,4S)-4-hydroxy-2,3,4,5-tetrahydrodipicolinate + NADH + H(+). It catalyses the reaction (S)-2,3,4,5-tetrahydrodipicolinate + NADP(+) + H2O = (2S,4S)-4-hydroxy-2,3,4,5-tetrahydrodipicolinate + NADPH + H(+). It participates in amino-acid biosynthesis; L-lysine biosynthesis via DAP pathway; (S)-tetrahydrodipicolinate from L-aspartate: step 4/4. Catalyzes the conversion of 4-hydroxy-tetrahydrodipicolinate (HTPA) to tetrahydrodipicolinate. This is 4-hydroxy-tetrahydrodipicolinate reductase from Rhodopseudomonas palustris (strain ATCC BAA-98 / CGA009).